A 104-amino-acid polypeptide reads, in one-letter code: Circadian clock oscillator protein KaiB (104 aa).

This sequence belongs to the KaiB family. In terms of assembly, the KaiABC complex composition changes during the circadian cycle to control KaiC phosphorylation. Complexes KaiC(6), KaiA(2-4):KaiC(6), KaiB(6):KaiC(6) and KaiC(6):KaiB(6):KaiA(12) are among the most important forms, many form cooperatively. Undergoes a major conformational rearrangment; in the free state forms homotetramers as a dimer of dimers. When bound to the CI domain of KaiC switches to a monomeric thioredoxin-fold (KaiB(fs)). KaiB(fs) binds CikA, leading it to dephosphorylate phospho-RpaA.

Functionally, key component of the KaiABC oscillator complex, which constitutes the main circadian regulator in cyanobacteria. Complex composition changes during the circadian cycle to control KaiC phosphorylation. KaiA stimulates KaiC autophosphorylation, while KaiB sequesters KaiA, leading to KaiC autodephosphorylation. Phospho-Ser-431 KaiC accumulation triggers binding of KaiB to form the KaiB(6):KaiC(6) complex, leading to changes in output regulators CikA and SasA. KaiB switches to a thioredoxin-like fold (KaiB(fs)) when bound to KaiC. KaiB(6):KaiC(6) formation exposes a site for KaiA binding that sequesters KaiA from KaiC, making the KaiC(6):KaiB(6):KaiA(12) complex that results in KaiC autodephosphorylation. A metamorphic protein which reversibly switches between an inactive tetrameric fold and a rare, thioredoxin-like monomeric fold (KaiB(fs)). KaiB(fs) binds phospho-KaiC, KaiA and CikA. KaiA and CikA compete for binding to KaiB(fs), and KaiB(fs) and SasA compete for binding to KaiC, thus the clock oscillator and output signal pathway are tightly coupled. The chain is Circadian clock oscillator protein KaiB from Picosynechococcus sp. (strain ATCC 27264 / PCC 7002 / PR-6) (Agmenellum quadruplicatum).